The primary structure comprises 102 residues: Large ribosomal subunit protein bL21 (102 aa).

Belongs to the bacterial ribosomal protein bL21 family. As to quaternary structure, part of the 50S ribosomal subunit. Contacts protein L20.

Its function is as follows. This protein binds to 23S rRNA in the presence of protein L20. The protein is Large ribosomal subunit protein bL21 of Bacillus pumilus (strain SAFR-032).